We begin with the raw amino-acid sequence, 411 residues long: Putative competence-damage inducible protein (411 aa).

Belongs to the CinA family.

This is Putative competence-damage inducible protein from Alkaliphilus metalliredigens (strain QYMF).